Here is a 358-residue protein sequence, read N- to C-terminus: 3-isopropylmalate dehydrogenase (358 aa).

77-90 provides a ligand contact to NAD(+); that stretch reads GPKWTNLPPDQQPE. Substrate-binding residues include Arg98, Arg108, Arg137, and Asp226. Asp226, Asp250, and Asp254 together coordinate Mg(2+). An NAD(+)-binding site is contributed by 284 to 296; it reads GSAPDIAGKGIAN.

Belongs to the isocitrate and isopropylmalate dehydrogenases family. LeuB type 1 subfamily. As to quaternary structure, homodimer. Mg(2+) is required as a cofactor. Requires Mn(2+) as cofactor.

It localises to the cytoplasm. It catalyses the reaction (2R,3S)-3-isopropylmalate + NAD(+) = 4-methyl-2-oxopentanoate + CO2 + NADH. It participates in amino-acid biosynthesis; L-leucine biosynthesis; L-leucine from 3-methyl-2-oxobutanoate: step 3/4. In terms of biological role, catalyzes the oxidation of 3-carboxy-2-hydroxy-4-methylpentanoate (3-isopropylmalate) to 3-carboxy-4-methyl-2-oxopentanoate. The product decarboxylates to 4-methyl-2 oxopentanoate. The protein is 3-isopropylmalate dehydrogenase of Haemophilus influenzae (strain 86-028NP).